Consider the following 169-residue polypeptide: Peptide deformylase (169 aa).

Residues Cys-91 and His-133 each contribute to the Fe cation site. The active site involves Glu-134. His-137 provides a ligand contact to Fe cation.

The protein belongs to the polypeptide deformylase family. Fe(2+) serves as cofactor.

It catalyses the reaction N-terminal N-formyl-L-methionyl-[peptide] + H2O = N-terminal L-methionyl-[peptide] + formate. Its function is as follows. Removes the formyl group from the N-terminal Met of newly synthesized proteins. Requires at least a dipeptide for an efficient rate of reaction. N-terminal L-methionine is a prerequisite for activity but the enzyme has broad specificity at other positions. This is Peptide deformylase from Escherichia coli (strain K12 / DH10B).